A 474-amino-acid polypeptide reads, in one-letter code: MVRAMTAPGSNIAAGALAPAKSSAWRTELIETLWLAWPMALTQLGQIAMMTTDLALIGRLGDAAVAAAALAHFVLFSTFTMGLGLVSAVTPLAAQAFGARAPRQVRASLRVGLWAGVIAGVPLTLGQLYGEELLVALGQNPATSRLAGDYLDGLAWSLVPGWLFIALRGLMGAVNRPEPALWIMLTAIPINLGLAYVLIHGSFGLPRLEIFGAGLATSIVSWAMCIAAAVVCVTMRPFRKYQVFGELFRFDGELMRRLLQLGLPISGASVLEYGVFGAAALLMGKFGTTALAAHQIALQVAAIMFMVPMGISVAATVRVGHAVGRGDPPSARRAGFAAIGLGFVFMAAMTLLVALTRHQIPQLFLGDSDTSIETATLTAALLIVGASFFIADGLQVVANGALRGRNDTKVPLLFAVLGFWVIGFPFCWVLGFHTDLGPFGVWIGLAVGLVVYAALLVWRFHRLTRDAMAAAVAA.

A run of 12 helical transmembrane segments spans residues 33-50, 65-87, 108-130, 150-172, 179-201, 211-233, 258-280, 295-317, 334-356, 376-398, 410-432, and 436-458; these read LWLAWPMALTQLGQIAMM, VAAAALAHFVLFSTFTMGLGLVS, SLRVGLWAGVIAGVPLTLGQLYG, YLDGLAWSLVPGWLFIALRGLMG, PALWIMLTAIPINLGLAYVLIHG, FGAGLATSIVSWAMCIAAAVVCV, LLQLGLPISGASVLEYGVFGAAA, QIALQVAAIMFMVPMGISVAATV, AGFAAIGLGFVFMAAMTLLVALT, TLTAALLIVGASFFIADGLQVVA, VPLLFAVLGFWVIGFPFCWVLGF, and LGPFGVWIGLAVGLVVYAALLVW.

Belongs to the multi antimicrobial extrusion (MATE) (TC 2.A.66.1) family.

Its subcellular location is the cell inner membrane. In terms of biological role, multidrug efflux pump. This chain is Probable multidrug resistance protein NorM (norM), found in Rhodopseudomonas palustris (strain ATCC BAA-98 / CGA009).